A 438-amino-acid polypeptide reads, in one-letter code: 23S rRNA (uracil(1939)-C(5))-methyltransferase RlmD (438 aa).

The TRAM domain maps to 10 to 68; sequence RVTTRQTITVKVHDLDSFGQGVAHHNGKALFVQGALPDEVAEVSIIEDKRHFSRGVATR. [4Fe-4S] cluster contacts are provided by C81, C87, C90, and C168. S-adenosyl-L-methionine-binding residues include Q271, F300, N305, E321, N348, and D369. The active-site Nucleophile is C395.

This sequence belongs to the class I-like SAM-binding methyltransferase superfamily. RNA M5U methyltransferase family. RlmD subfamily.

The enzyme catalyses uridine(1939) in 23S rRNA + S-adenosyl-L-methionine = 5-methyluridine(1939) in 23S rRNA + S-adenosyl-L-homocysteine + H(+). In terms of biological role, catalyzes the formation of 5-methyl-uridine at position 1939 (m5U1939) in 23S rRNA. The chain is 23S rRNA (uracil(1939)-C(5))-methyltransferase RlmD from Erwinia tasmaniensis (strain DSM 17950 / CFBP 7177 / CIP 109463 / NCPPB 4357 / Et1/99).